The chain runs to 297 residues: Glucose-6-phosphate 1-epimerase (297 aa).

3 residues coordinate substrate: arginine 57, glutamine 81, and arginine 86. At serine 88 the chain carries Phosphoserine. Histidine 159 is a catalytic residue. A substrate-binding site is contributed by aspartate 203. Residue glutamate 264 is part of the active site.

The protein belongs to the glucose-6-phosphate 1-epimerase family.

The catalysed reaction is alpha-D-glucose 6-phosphate = beta-D-glucose 6-phosphate. Its function is as follows. Catalyzes the interconversion between the alpha and beta anomers from at least three hexose 6-phosphate sugars (Glc6P, Gal6P, and Man6P). The sequence is that of Glucose-6-phosphate 1-epimerase from Saccharomyces cerevisiae (strain ATCC 204508 / S288c) (Baker's yeast).